A 118-amino-acid chain; its full sequence is Small ribosomal subunit protein eS10 (118 aa).

The interval 91–118 (RLKNAPAERPRPSRGGPRRGGYRGRARD) is disordered. The span at 106-118 (GPRRGGYRGRARD) shows a compositional bias: basic residues.

It belongs to the eukaryotic ribosomal protein eS10 family. As to quaternary structure, component of the small ribosomal subunit. Mature ribosomes consist of a small (40S) and a large (60S) subunit. The 40S subunit contains about 32 different proteins and 1 molecule of RNA (18S). The 60S subunit contains 45 different proteins and 3 molecules of RNA (25S, 5.8S and 5S).

The protein localises to the cytoplasm. Component of the ribosome, a large ribonucleoprotein complex responsible for the synthesis of proteins in the cell. The small ribosomal subunit (SSU) binds messenger RNAs (mRNAs) and translates the encoded message by selecting cognate aminoacyl-transfer RNA (tRNA) molecules. The large subunit (LSU) contains the ribosomal catalytic site termed the peptidyl transferase center (PTC), which catalyzes the formation of peptide bonds, thereby polymerizing the amino acids delivered by tRNAs into a polypeptide chain. The nascent polypeptides leave the ribosome through a tunnel in the LSU and interact with protein factors that function in enzymatic processing, targeting, and the membrane insertion of nascent chains at the exit of the ribosomal tunnel. This is Small ribosomal subunit protein eS10 (RPS10) from Candida albicans (strain SC5314 / ATCC MYA-2876) (Yeast).